We begin with the raw amino-acid sequence, 132 residues long: MGKIFTLAEVAQHNNSKDCWLIINGKVYDVTKFLEDHPGGDDVLLSATGKDATDDFEDIGHSSSAKAMLDEYYVGDIDSSSIPSQVKYTPPKQPLYNPDKTREFVIKLLQFLVPLVILAGAIGIRFYTKSSA.

One can recognise a Cytochrome b5 heme-binding domain in the interval 2 to 78; it reads GKIFTLAEVA…LDEYYVGDID (77 aa). Positions 37 and 61 each coordinate heme. A helical membrane pass occupies residues 104-124; the sequence is FVIKLLQFLVPLVILAGAIGI.

Belongs to the cytochrome b5 family.

It is found in the endoplasmic reticulum membrane. The protein localises to the microsome membrane. Functionally, membrane bound hemoprotein which function as an electron carrier for several membrane bound oxygenases. This Borago officinalis (Bourrache) protein is Cytochrome b5.